The primary structure comprises 54 residues: Apelin receptor early endogenous ligand (54 aa).

The signal sequence occupies residues 1-22 (MRFQQFLFAFFIFIMSLLLISG). N-linked (GlcNAc...) asparagine glycosylation is present at asparagine 27.

It belongs to the Elabela/Toddler family. As to quaternary structure, interacts with APLNR. In terms of tissue distribution, expressed in the intima of blood vessels. Expressed in endothelial cells in blood vessels in the heart and lung. Expressed in cytotrophoblasts and syncytiotrophoblasts of first-trimester placental tissue and term placentas (at protein level). Not detected in smooth muscle cells or cardiomyocytes (at protein level). Expressed in kidney. Expressed in blood vessels. Expressed in embryonic (ESCs) and induced (iPSCs) pluripotent stem cells. Most highly expressed in undifferentiated embryonic stem cell and is rapidly down-regulated during differentiation.

It localises to the secreted. Its subcellular location is the extracellular space. In terms of biological role, peptide hormone that functions as endogenous ligand for the G-protein-coupled apelin receptor (APLNR/APJ), that plays a role in the regulation of normal cardiovascular function and fluid homeostasis. Functions as a balanced agonist activating both G(i) protein pathway and beta-arrestin pathway of APLNR. Downstream G proteins activation, apelin can inhibit cAMP production and activate key intracellular effectors such as ERKs. On the other hand, APLNR activation induces beta-arrestin recruitment to the membrane leading to desensitization and internalization of the receptor. Required for mesendodermal differentiation, blood vessels formation and heart morphogenesis during early development and for adult cardiovascular homeostasis. Acts as a motogen by promoting mesendodermal cell migration during gastrulation by binding and activating APLNR. Acts as an early embryonic regulator of cellular movement with a role in migration and development of cardiac progenitor cells. May act as a chemoattractant for the activation of angioblast migration toward the embryonic midline, i.e. the position of the future vessel formation, during vasculogenesis. Positively regulates sinus venosus (SV)-derived endothelial cells migration into the developing heart to promote coronary blood vessel sprouting. Plays a role in placental vascular development; promotes placental trophoblast invasion and spiral artery remodeling in the uterus. Involved in the regulation of maternal cardiovascular homeostasis to prevent gestational hypertension and for potent cardioprotective functions during heart failure. Mediates myocardial contractility in an ERK1/2-dependent manner. The sequence is that of Apelin receptor early endogenous ligand from Homo sapiens (Human).